The primary structure comprises 159 residues: Transcriptional repressor NrdR (159 aa).

Residues 1–22 (MRCPFCGSEDTQVKDSRPAEDN) form a disordered region. A zinc finger spans residues 3 to 34 (CPFCGSEDTQVKDSRPAEDNTSIRRRRICPDC). The span at 11-22 (TQVKDSRPAEDN) shows a compositional bias: basic and acidic residues. The region spanning 49–139 (LMVIKKSGRK…VYRDFSHAED (91 aa)) is the ATP-cone domain.

It belongs to the NrdR family. It depends on Zn(2+) as a cofactor.

Functionally, negatively regulates transcription of bacterial ribonucleotide reductase nrd genes and operons by binding to NrdR-boxes. The protein is Transcriptional repressor NrdR of Agrobacterium fabrum (strain C58 / ATCC 33970) (Agrobacterium tumefaciens (strain C58)).